Here is a 125-residue protein sequence, read N- to C-terminus: Ribosome-binding factor A (125 aa).

This sequence belongs to the RbfA family. Monomer. Binds 30S ribosomal subunits, but not 50S ribosomal subunits or 70S ribosomes.

It is found in the cytoplasm. Functionally, one of several proteins that assist in the late maturation steps of the functional core of the 30S ribosomal subunit. Associates with free 30S ribosomal subunits (but not with 30S subunits that are part of 70S ribosomes or polysomes). Required for efficient processing of 16S rRNA. May interact with the 5'-terminal helix region of 16S rRNA. In Desulfitobacterium hafniense (strain DSM 10664 / DCB-2), this protein is Ribosome-binding factor A.